Consider the following 290-residue polypeptide: HTH-type transcriptional activator RhaR (290 aa).

Positions 179-277 constitute an HTH araC/xylS-type domain; that stretch reads DLIMSALQQS…GMTPRDYRQR (99 aa). DNA-binding regions (H-T-H motif) lie at residues 196–217 and 244–267; these read ANFC…RQQT and ISDI…TREA.

Binds DNA as a dimer.

It is found in the cytoplasm. Its function is as follows. Activates expression of the rhaSR operon in response to L-rhamnose. The sequence is that of HTH-type transcriptional activator RhaR from Yersinia pseudotuberculosis serotype O:3 (strain YPIII).